Reading from the N-terminus, the 314-residue chain is Ribosomal protein L11 methyltransferase (314 aa).

Positions 161, 182, 204, and 248 each coordinate S-adenosyl-L-methionine.

This sequence belongs to the methyltransferase superfamily. PrmA family.

The protein resides in the cytoplasm. It carries out the reaction L-lysyl-[protein] + 3 S-adenosyl-L-methionine = N(6),N(6),N(6)-trimethyl-L-lysyl-[protein] + 3 S-adenosyl-L-homocysteine + 3 H(+). Functionally, methylates ribosomal protein L11. This is Ribosomal protein L11 methyltransferase from Listeria monocytogenes serotype 4a (strain HCC23).